Reading from the N-terminus, the 141-residue chain is Cystatin (141 aa).

An N-terminal signal peptide occupies residues 1–26 (MLHSQLPVAAPLRLLCALLLLPSVTM). The Cystatin domain occupies 29–129 (GGLSPRSVTD…CRFQVWSRPW (101 aa)). The Secondary area of contact motif lies at 73–77 (QVVTG). Disulfide bonds link cysteine 91–cysteine 107 and cysteine 120–cysteine 140.

This sequence belongs to the cystatin family. Expressed at a low level by the venom gland (at protein level).

It is found in the secreted. Its function is as follows. Inhibits various C1 cysteine proteases including cathepsin L, papain and cathepsin B. This protein has no toxic activity and its function in the venom is unknown. It may play a role as a housekeeping or regulatory protein. The protein is Cystatin of Hoplocephalus stephensii (Stephens's banded snake).